A 361-amino-acid polypeptide reads, in one-letter code: Diacylglycerol O-acyltransferase 2 (361 aa).

Residues 1–42 (MKTILAAYSGVKKGSGSSILSALHDLPTVPWLTRSKMVKHLQ) are Cytoplasmic-facing. Residues 43–61 (VISVLQFIMTFLTMGIACS) traverse the membrane as a helical segment. The Lumenal segment spans residues 62–65 (LLLM). The helical transmembrane segment at 66 to 85 (YMFCTDFWVISVLYVAWLIY) threads the bilayer. The Cytoplasmic segment spans residues 86 to 361 (DWNTPGQGGR…LNESDTLIIH (276 aa)).

It belongs to the diacylglycerol acyltransferase family.

Its subcellular location is the endoplasmic reticulum membrane. It localises to the lipid droplet. It is found in the cytoplasm. The protein resides in the perinuclear region. It carries out the reaction an acyl-CoA + a 1,2-diacyl-sn-glycerol = a triacyl-sn-glycerol + CoA. The enzyme catalyses all-trans-retinol + an acyl-CoA = an all-trans-retinyl ester + CoA. The catalysed reaction is 2-(9Z-octadecenoyl)-glycerol + (9Z)-octadecenoyl-CoA = 1,2-di-(9Z-octadecenoyl)-sn-glycerol + CoA. It catalyses the reaction 1,2-di-(9Z-octadecenoyl)-sn-glycerol + (9Z)-octadecenoyl-CoA = 1,2,3-tri-(9Z-octadecenoyl)-glycerol + CoA. It carries out the reaction all-trans-retinol + hexadecanoyl-CoA = all-trans-retinyl hexadecanoate + CoA. The enzyme catalyses 1-O-(9Z-octadecenyl)-glycerol + (9Z)-octadecenoyl-CoA = 1-O-(9Z-octadecyl)-3-(9Z-octadecenoyl)-glycerol + CoA. The catalysed reaction is 1-(9Z-octadecenoyl)-glycerol + (9Z)-octadecenoyl-CoA = 1,2-di-(9Z-octadecenoyl)-glycerol + CoA. It catalyses the reaction 1,2-di-(9Z-octadecenoyl)-sn-glycerol + hexadecanoyl-CoA = 1,2-di-(9Z)-octadecenoyl-3-hexadecanoyl-sn-glycerol + CoA. It carries out the reaction 1,3-di-(9Z-octadecenoyl)-glycerol + (9Z)-octadecenoyl-CoA = 1,2,3-tri-(9Z-octadecenoyl)-glycerol + CoA. The enzyme catalyses 2,3-di-(9Z)-octadecenoyl-sn-glycerol + (9Z)-octadecenoyl-CoA = 1,2,3-tri-(9Z-octadecenoyl)-glycerol + CoA. The catalysed reaction is 2-(9Z-octadecenoyl)-glycerol + hexadecanoyl-CoA = 1-hexadecanoyl-2-(9Z-octadecenoyl)-sn-glycerol + CoA. It functions in the pathway glycerolipid metabolism; triacylglycerol biosynthesis. Essential acyltransferase that catalyzes the terminal and only committed step in triacylglycerol synthesis by using diacylglycerol and fatty acyl CoA as substrates. Required for synthesis and storage of intracellular triglycerides. Probably plays a central role in cytosolic lipid accumulation. The sequence is that of Diacylglycerol O-acyltransferase 2 (dgat2) from Danio rerio (Zebrafish).